The primary structure comprises 360 residues: Phenylalanine--tRNA ligase alpha subunit (360 aa).

Glutamate 260 is a binding site for Mg(2+).

It belongs to the class-II aminoacyl-tRNA synthetase family. Phe-tRNA synthetase alpha subunit type 1 subfamily. As to quaternary structure, tetramer of two alpha and two beta subunits. Requires Mg(2+) as cofactor.

It localises to the cytoplasm. The catalysed reaction is tRNA(Phe) + L-phenylalanine + ATP = L-phenylalanyl-tRNA(Phe) + AMP + diphosphate + H(+). This chain is Phenylalanine--tRNA ligase alpha subunit, found in Sinorhizobium fredii (strain NBRC 101917 / NGR234).